Consider the following 218-residue polypeptide: Small ribosomal subunit protein uS3c (218 aa).

Residues 47 to 118 (VQKNMRTSSG…KLNIAVTRIA (72 aa)) form the KH type-2 domain.

This sequence belongs to the universal ribosomal protein uS3 family. Part of the 30S ribosomal subunit.

The protein localises to the plastid. It localises to the chloroplast. The chain is Small ribosomal subunit protein uS3c (rps3) from Atropa belladonna (Belladonna).